Here is a 336-residue protein sequence, read N- to C-terminus: DNA-directed RNA polymerase subunit alpha (336 aa).

The tract at residues 1–232 (MIQKNWQELI…DQLGVFVNFD (232 aa)) is alpha N-terminal domain (alpha-NTD). The tract at residues 248–336 (FNPALLKKVD…DLAKRYEDQY (89 aa)) is alpha C-terminal domain (alpha-CTD).

Belongs to the RNA polymerase alpha chain family. Homodimer. The RNAP catalytic core consists of 2 alpha, 1 beta, 1 beta' and 1 omega subunit. When a sigma factor is associated with the core the holoenzyme is formed, which can initiate transcription.

It catalyses the reaction RNA(n) + a ribonucleoside 5'-triphosphate = RNA(n+1) + diphosphate. Functionally, DNA-dependent RNA polymerase catalyzes the transcription of DNA into RNA using the four ribonucleoside triphosphates as substrates. This Rhizobium rhizogenes (strain K84 / ATCC BAA-868) (Agrobacterium radiobacter) protein is DNA-directed RNA polymerase subunit alpha.